The chain runs to 279 residues: Energy-coupling factor transporter ATP-binding protein EcfA1 (279 aa).

Positions 6 to 240 (ISVDHLTYQY…GTQLVEMGLD (235 aa)) constitute an ABC transporter domain. ATP is bound at residue 40 to 47 (GHNGSGKS).

This sequence belongs to the ABC transporter superfamily. Energy-coupling factor EcfA family. Forms a stable energy-coupling factor (ECF) transporter complex composed of 2 membrane-embedded substrate-binding proteins (S component), 2 ATP-binding proteins (A component) and 2 transmembrane proteins (T component).

The protein resides in the cell membrane. In terms of biological role, ATP-binding (A) component of a common energy-coupling factor (ECF) ABC-transporter complex. Unlike classic ABC transporters this ECF transporter provides the energy necessary to transport a number of different substrates. The chain is Energy-coupling factor transporter ATP-binding protein EcfA1 from Levilactobacillus brevis (strain ATCC 367 / BCRC 12310 / CIP 105137 / JCM 1170 / LMG 11437 / NCIMB 947 / NCTC 947) (Lactobacillus brevis).